A 537-amino-acid polypeptide reads, in one-letter code: Bifunctional purine biosynthesis protein PurH (537 aa).

An MGS-like domain is found at 8–158 (IPAPDLVPVR…KNHAYVAVVT (151 aa)).

This sequence belongs to the PurH family.

It carries out the reaction (6R)-10-formyltetrahydrofolate + 5-amino-1-(5-phospho-beta-D-ribosyl)imidazole-4-carboxamide = 5-formamido-1-(5-phospho-D-ribosyl)imidazole-4-carboxamide + (6S)-5,6,7,8-tetrahydrofolate. The catalysed reaction is IMP + H2O = 5-formamido-1-(5-phospho-D-ribosyl)imidazole-4-carboxamide. Its pathway is purine metabolism; IMP biosynthesis via de novo pathway; 5-formamido-1-(5-phospho-D-ribosyl)imidazole-4-carboxamide from 5-amino-1-(5-phospho-D-ribosyl)imidazole-4-carboxamide (10-formyl THF route): step 1/1. The protein operates within purine metabolism; IMP biosynthesis via de novo pathway; IMP from 5-formamido-1-(5-phospho-D-ribosyl)imidazole-4-carboxamide: step 1/1. The chain is Bifunctional purine biosynthesis protein PurH from Chelativorans sp. (strain BNC1).